We begin with the raw amino-acid sequence, 160 residues long: Transcription elongation factor GreA (160 aa).

Residues serine 49–alanine 75 adopt a coiled-coil conformation.

The protein belongs to the GreA/GreB family.

Necessary for efficient RNA polymerase transcription elongation past template-encoded arresting sites. The arresting sites in DNA have the property of trapping a certain fraction of elongating RNA polymerases that pass through, resulting in locked ternary complexes. Cleavage of the nascent transcript by cleavage factors such as GreA or GreB allows the resumption of elongation from the new 3'terminus. GreA releases sequences of 2 to 3 nucleotides. This Clostridium botulinum (strain Eklund 17B / Type B) protein is Transcription elongation factor GreA.